Here is a 334-residue protein sequence, read N- to C-terminus: L-lactate dehydrogenase B chain (334 aa).

An N-acetylalanine modification is found at A2. K7 bears the N6-acetyllysine mark. S11 and S44 each carry phosphoserine. Residues 30–58 (GQVG…LEDK) and R100 contribute to the NAD(+) site. Position 58 is an N6-acetyllysine (K58). Residue R107 participates in substrate binding. K119 carries the N6-acetyllysine modification. Residue N139 participates in NAD(+) binding. Substrate contacts are provided by N139 and R170. Residue H194 is the Proton acceptor of the active site. Y240 is modified (phosphotyrosine). T249 contributes to the substrate binding site. K329 bears the N6-acetyllysine mark.

It belongs to the LDH/MDH superfamily. LDH family. Homotetramer. Interacts with PTEN upstream reading frame protein MP31; the interaction leads to inhibition of mitochondrial lactate dehydrogenase activity, preventing conversion of lactate to pyruvate in mitochondria.

Its subcellular location is the cytoplasm. It localises to the mitochondrion inner membrane. It carries out the reaction (S)-lactate + NAD(+) = pyruvate + NADH + H(+). It participates in fermentation; pyruvate fermentation to lactate; (S)-lactate from pyruvate: step 1/1. Functionally, interconverts simultaneously and stereospecifically pyruvate and lactate with concomitant interconversion of NADH and NAD(+). The protein is L-lactate dehydrogenase B chain (Ldhb) of Mus musculus (Mouse).